Here is a 357-residue protein sequence, read N- to C-terminus: Glycerol-3-phosphate dehydrogenase [NAD(P)+] (357 aa).

S12, W13, H33, and K115 together coordinate NADPH. K115, G149, and S151 together coordinate sn-glycerol 3-phosphate. Position 153 (G153) interacts with NADPH. K204, D263, R274, and N275 together coordinate sn-glycerol 3-phosphate. The Proton acceptor role is filled by K204. NADPH is bound at residue R274. NADPH is bound by residues L307 and E309.

Belongs to the NAD-dependent glycerol-3-phosphate dehydrogenase family.

The protein resides in the cytoplasm. The enzyme catalyses sn-glycerol 3-phosphate + NAD(+) = dihydroxyacetone phosphate + NADH + H(+). It catalyses the reaction sn-glycerol 3-phosphate + NADP(+) = dihydroxyacetone phosphate + NADPH + H(+). Its pathway is membrane lipid metabolism; glycerophospholipid metabolism. Functionally, catalyzes the reduction of the glycolytic intermediate dihydroxyacetone phosphate (DHAP) to sn-glycerol 3-phosphate (G3P), the key precursor for phospholipid synthesis. The protein is Glycerol-3-phosphate dehydrogenase [NAD(P)+] of Treponema denticola (strain ATCC 35405 / DSM 14222 / CIP 103919 / JCM 8153 / KCTC 15104).